The sequence spans 338 residues: Probable cytosolic iron-sulfur protein assembly protein Ciao1 (338 aa).

WD repeat units lie at residues 12–51 (GHRG…RWVP), 58–97 (GHTR…FECN), 102–141 (GHEN…EYEC), 147–186 (THSQ…SDWS), 193–232 (SHDS…NEFG), 234–252 (ACPD…LSGF), 253–291 (HSRA…PANE), and 302–338 (AHSQ…EDDE).

The protein belongs to the WD repeat CIA1 family.

Functionally, essential component of the cytosolic iron-sulfur (Fe/S) protein assembly machinery. Required for the maturation of extramitochondrial Fe/S proteins. This chain is Probable cytosolic iron-sulfur protein assembly protein Ciao1, found in Culex quinquefasciatus (Southern house mosquito).